Consider the following 399-residue polypeptide: Bone morphogenetic protein 8B (399 aa).

The first 19 residues, 1–19 (MAARPGLLWLLGLALCVLG), serve as a signal peptide directing secretion. The propeptide occupies 20 to 260 (GGHLSHPPHV…ANQSPVRAPR (241 aa)). Asn155 and Asn340 each carry an N-linked (GlcNAc...) asparagine glycan. 3 disulfide bridges follow: Cys298/Cys364, Cys327/Cys396, and Cys331/Cys398.

The protein belongs to the TGF-beta family. As to quaternary structure, homodimer; disulfide-linked. In terms of tissue distribution, expressed in testis. Expressed in decidual cells of the uterus and in trophoblast cells of the labyrinthine region of the placenta and in the inner root sheath of hair follicles of early postnatal skin. Expressed in the extraembryonic ectoderm in pregastrula and gastrula stage mouse embryos. Expressed in brown adipose tissue and brain.

Its subcellular location is the secreted. Its function is as follows. Induces cartilage and bone formation. May be the osteoinductive factor responsible for the phenomenon of epithelial osteogenesis. Plays a role in calcium regulation and bone homeostasis. Involved in the generation of primordial germ cells; this function involves Bmp4 in a synergistic manner though separate receptor complexes seem to be involved. Required for the initiation and maintenance of spermatogenesis. Signaling protein involved in regulation of thermogenesis and energy balance. Proposed to increase the peripheral response of brown adipose tissue (BAT) to adrenergic stimulation while acting centrally in the hypothalamus to increase sympathetic output to BAT. The sequence is that of Bone morphogenetic protein 8B (Bmp8b) from Mus musculus (Mouse).